A 223-amino-acid chain; its full sequence is uncharacterized protein (223 aa).

The N-terminal stretch at 1–17 is a signal peptide; sequence MLGQGLIFISLAFVAHA. The N-linked (GlcNAc...) asparagine glycan is linked to Asn-58. The segment at 149 to 188 is disordered; the sequence is VRKKGSRPSKPQKEKQGNKQGSKTEESPNVDEDELESEPE. The span at 159-174 shows a compositional bias: basic and acidic residues; it reads PQKEKQGNKQGSKTEE. The span at 176 to 187 shows a compositional bias: acidic residues; the sequence is PNVDEDELESEP. A helical membrane pass occupies residues 191 to 211; it reads TFFQKYGLYLIPILFLIIMSG.

The protein resides in the endoplasmic reticulum membrane. This is an uncharacterized protein from Schizosaccharomyces pombe (strain 972 / ATCC 24843) (Fission yeast).